The sequence spans 469 residues: Protein apterous (469 aa).

Disordered regions lie at residues 21-44 (GPGA…CGSA) and 111-141 (EVSD…DSKI). LIM zinc-binding domains are found at residues 148–200 (CSGC…CKND) and 210–263 (CSRC…CRTH). A DNA-binding region (homeobox) is located at residues 367–426 (TKRMRTSFKHHQLRTMKSYFAINHNPDAKDLKQLSQKTGLPKRVLQVWFQNARAKWRRMM).

In terms of tissue distribution, expressed in PNS and CNS.

The protein localises to the nucleus. In terms of biological role, required for the normal development of the wing and halter imaginal disks. This chain is Protein apterous (ap), found in Drosophila melanogaster (Fruit fly).